The sequence spans 576 residues: Deformed epidermal autoregulatory factor 1 (576 aa).

Disordered stretches follow at residues 52 to 76 (VTSS…GGGN), 189 to 215 (AGGA…NPST), and 309 to 362 (ESAS…SGSG). Gly residues-rich tracts occupy residues 61-76 (GSGG…GGGN) and 191-207 (GASG…GGSS). An SAND domain is found at 210–291 (SENPSTQHNE…QSLIDEGTLT (82 aa)). The Nuclear localization signal motif lies at 324-340 (RKRNQTDLDMESGPKRK). Low complexity predominate over residues 345–362 (HSNNNNSNTNNNNTSGSG). Zn(2+) contacts are provided by Cys521, Cys524, Cys532, Cys535, Cys541, Cys545, His553, and Cys557. The MYND-type zinc finger occupies 521-557 (CANCNREALAECSLCRKTPYCSEFCQRKDWNAHQVEC).

Its subcellular location is the nucleus. Its function is as follows. Transcription factor that binds the homeotic Deformed (Dfd) response element. High affinity binding sites contain at least 1 TTCG motif surrounded by additional TCG sequences. May be involved in the selective action of Dfd on these sites without binding directly to the Dfd protein. Requirement of DEAF1 activity may be a common feature of enhancers targeted by Dfd. The polypeptide is Deformed epidermal autoregulatory factor 1 (Deaf1) (Drosophila melanogaster (Fruit fly)).